A 782-amino-acid polypeptide reads, in one-letter code: Translation initiation factor IF-2 (782 aa).

A compositionally biased stretch (basic and acidic residues) spans 1 to 14 (MSKNIDDKNEDGKK). 2 disordered regions span residues 1-106 (MSKN…KKTY) and 132-174 (SIVS…AETE). Basic residues predominate over residues 15–25 (IKIIKLRKKVV). Over residues 31–43 (NDLSGKNNPSGST) the composition is skewed to polar residues. Residues 44-61 (DLHKHNNKVEYSHSRDGR) are compositionally biased toward basic and acidic residues. 2 stretches are compositionally biased toward polar residues: residues 86–106 (GYSQ…KKTY) and 133–142 (IVSSASSTDS). A compositionally biased stretch (basic and acidic residues) spans 143–159 (ENSKELNRKLGEKKKQQ). The region spanning 280–453 (EKPPVITIMG…DMMLLKANPS (174 aa)) is the tr-type G domain. Residues 289-296 (GHVDHGKT) form a G1 region. 289–296 (GHVDHGKT) provides a ligand contact to GTP. The tract at residues 314 to 318 (GITQH) is G2. A G3 region spans residues 335-338 (DTPG). Residues 335-339 (DTPGH) and 389-392 (NKID) each bind GTP. Positions 389 to 392 (NKID) are G4. Positions 425-427 (SAL) are G5.

The protein belongs to the TRAFAC class translation factor GTPase superfamily. Classic translation factor GTPase family. IF-2 subfamily.

It is found in the cytoplasm. Its function is as follows. One of the essential components for the initiation of protein synthesis. Protects formylmethionyl-tRNA from spontaneous hydrolysis and promotes its binding to the 30S ribosomal subunits. Also involved in the hydrolysis of GTP during the formation of the 70S ribosomal complex. The protein is Translation initiation factor IF-2 of Borreliella afzelii (strain PKo) (Borrelia afzelii).